The following is a 92-amino-acid chain: UPF0473 protein BCE33L4129 (92 aa).

It belongs to the UPF0473 family.

The sequence is that of UPF0473 protein BCE33L4129 from Bacillus cereus (strain ZK / E33L).